The following is a 416-amino-acid chain: Serine hydroxymethyltransferase (416 aa).

(6S)-5,6,7,8-tetrahydrofolate contacts are provided by residues L121 and G125–L127. At K230 the chain carries N6-(pyridoxal phosphate)lysine.

Belongs to the SHMT family. As to quaternary structure, homodimer. It depends on pyridoxal 5'-phosphate as a cofactor.

The protein resides in the cytoplasm. The catalysed reaction is (6R)-5,10-methylene-5,6,7,8-tetrahydrofolate + glycine + H2O = (6S)-5,6,7,8-tetrahydrofolate + L-serine. It functions in the pathway one-carbon metabolism; tetrahydrofolate interconversion. It participates in amino-acid biosynthesis; glycine biosynthesis; glycine from L-serine: step 1/1. In terms of biological role, catalyzes the reversible interconversion of serine and glycine with tetrahydrofolate (THF) serving as the one-carbon carrier. This reaction serves as the major source of one-carbon groups required for the biosynthesis of purines, thymidylate, methionine, and other important biomolecules. Also exhibits THF-independent aldolase activity toward beta-hydroxyamino acids, producing glycine and aldehydes, via a retro-aldol mechanism. The protein is Serine hydroxymethyltransferase of Nitrosomonas europaea (strain ATCC 19718 / CIP 103999 / KCTC 2705 / NBRC 14298).